A 420-amino-acid chain; its full sequence is Protein-lysine 6-oxidase (420 aa).

An N-terminal signal peptide occupies residues 1–27; the sequence is MRCAPPGLLLAQLHACIFWSGLWPAGC. Residues 28 to 171 constitute a propeptide, removed by BMP1; it reads QSPPAAWRQR…RPGREDVMVG (144 aa). Residues 54-177 form a disordered region; the sequence is AQYQPPRRRQ…VMVGDDPYSP (124 aa). N-linked (GlcNAc...) asparagine glycosylation is present at asparagine 78. A compositionally biased stretch (low complexity) spans 82 to 92; it reads PRAAAAAAARP. A compositionally biased stretch (pro residues) spans 93–105; the sequence is QPEPQPQAQPQPR. 2 stretches are compositionally biased toward basic residues: residues 107 to 119 and 134 to 147; these read RSSRRQPLGRRHW and APRRRPRGRRSRRR. Tyrosine 190 bears the Sulfotyrosine mark. The interval 216 to 420 is lysyl-oxidase like; sequence PDLVPDPYYI…YASGCTISPY (205 aa). 5 disulfide bridges follow: cysteine 241–cysteine 247, cysteine 294–cysteine 343, cysteine 327–cysteine 333, cysteine 354–cysteine 364, and cysteine 401–cysteine 415. Positions 295, 297, and 299 each coordinate Cu cation. The segment at residues 323 to 358 is a cross-link (lysine tyrosylquinone (Lys-Tyr)); it reads KASFCLEDTSCDYGYYRRYACTAHTQGLSPGCYDTY. Tyrosine 358 carries the 2',4',5'-topaquinone modification.

This sequence belongs to the lysyl oxidase family. Cu cation serves as cofactor. Requires lysine tyrosylquinone residue as cofactor. The lysine tyrosylquinone cross-link (LTQ) is generated by condensation of the epsilon-amino group of a lysine with a topaquinone produced by oxidation of tyrosine. Post-translationally, proteolytically cleaved by BMP1 which removes the propeptide. Also proteolytically cleaved by ADAMTS2 and ADAMTS14, but not by ADAMTS3, at an additional cleavage site downstream of the BMP1 cleavage site. The propeptide plays a role in directing the deposition of this enzyme to elastic fibers, via interaction with tropoelastin. Cleavage by BMP1 to remove the propeptide does not increase enzymatic activity but increases binding to collagen. Cleavage by ADAMTS2 produces a form with reduced collagen-binding activity. In terms of processing, sulfated at Tyr-190 and also at either Tyr-186 or Tyr-187 which enhances binding to collagen.

It is found in the secreted. The protein localises to the extracellular space. It catalyses the reaction L-lysyl-[protein] + O2 + H2O = (S)-2-amino-6-oxohexanoyl-[protein] + H2O2 + NH4(+). Responsible for the post-translational oxidative deamination of peptidyl lysine residues in precursors to fibrous collagen and elastin. Its function is as follows. In addition to cross linking of extracellular matrix proteins, it may have a direct role in tumor suppression. This chain is Protein-lysine 6-oxidase (LOX), found in Gallus gallus (Chicken).